Here is a 396-residue protein sequence, read N- to C-terminus: Multidrug resistance protein MdtL (396 aa).

Residues M1–Y4 lie on the Cytoplasmic side of the membrane. A helical transmembrane segment spans residues L5–G25. Topologically, residues L26–H41 are periplasmic. The chain crosses the membrane as a helical span at residues I42–A62. At D63–R64 the chain is on the cytoplasmic side. Residues I65–A85 form a helical membrane-spanning segment. The Periplasmic segment spans residues A86–D92. The helical transmembrane segment at L93–F113 threads the bilayer. At A114–M131 the chain is on the cytoplasmic side. Residues V132 to L152 form a helical membrane-spanning segment. The Periplasmic segment spans residues R153–P157. The helical transmembrane segment at S158–L178 threads the bilayer. Over R179 to V209 the chain is Cytoplasmic. A helical transmembrane segment spans residues V210 to I230. Topologically, residues M231–S242 are periplasmic. The helical transmembrane segment at N243–L263 threads the bilayer. The Cytoplasmic portion of the chain corresponds to N264–T277. The next 2 membrane-spanning stretches (helical) occupy residues L278–F298 and N299–S319. The Cytoplasmic segment spans residues Q320–S333. A helical transmembrane segment spans residues S334–L354. Topologically, residues E355–N360 are periplasmic. Residues I361–P381 traverse the membrane as a helical segment. Topologically, residues K382 to A396 are cytoplasmic.

It belongs to the major facilitator superfamily. DHA1 family. MdtL (TC 2.A.1.2.22) subfamily.

It is found in the cell inner membrane. This is Multidrug resistance protein MdtL from Shewanella sp. (strain ANA-3).